The primary structure comprises 92 residues: MSTSDFEERVVTVPLRDVSAVPTHERAGRAMTLIREHLAQHFRVDESDIRLDPSLNETVWARGSQNPPSKLRVRAARFDEDGESIVEAEPAE.

This sequence belongs to the eukaryotic ribosomal protein eL31 family.

This chain is Large ribosomal subunit protein eL31, found in Haloquadratum walsbyi (strain DSM 16790 / HBSQ001).